Consider the following 295-residue polypeptide: Small ribosomal subunit protein uS2 (295 aa).

Residues 242–295 form a disordered region; that stretch reads APVEPTLARELAPEAPAPEAPAEEAPAAEAAPAAEAAPAAEAAPAEASSEEQAG. A compositionally biased stretch (low complexity) spans 264–288; sequence EEAPAAEAAPAAEAAPAAEAAPAEA.

Belongs to the universal ribosomal protein uS2 family.

This chain is Small ribosomal subunit protein uS2, found in Phenylobacterium zucineum (strain HLK1).